The sequence spans 113 residues: Large ribosomal subunit protein bL20c (113 aa).

It belongs to the bacterial ribosomal protein bL20 family.

Its subcellular location is the plastid. It localises to the chloroplast. Functionally, binds directly to 23S ribosomal RNA and is necessary for the in vitro assembly process of the 50S ribosomal subunit. It is not involved in the protein synthesizing functions of that subunit. The protein is Large ribosomal subunit protein bL20c of Nephroselmis olivacea (Green alga).